The sequence spans 276 residues: Pantothenate synthetase (276 aa).

26–33 (MGYLHEGH) is an ATP binding site. Catalysis depends on H33, which acts as the Proton donor. Residue Q57 participates in (R)-pantoate binding. Residue Q57 participates in beta-alanine binding. An ATP-binding site is contributed by 142–145 (GLKD). Q148 contacts (R)-pantoate. Residues I171 and 179–182 (KSSR) each bind ATP.

Belongs to the pantothenate synthetase family. Homodimer.

Its subcellular location is the cytoplasm. It carries out the reaction (R)-pantoate + beta-alanine + ATP = (R)-pantothenate + AMP + diphosphate + H(+). It functions in the pathway cofactor biosynthesis; (R)-pantothenate biosynthesis; (R)-pantothenate from (R)-pantoate and beta-alanine: step 1/1. Its function is as follows. Catalyzes the condensation of pantoate with beta-alanine in an ATP-dependent reaction via a pantoyl-adenylate intermediate. This is Pantothenate synthetase from Exiguobacterium sp. (strain ATCC BAA-1283 / AT1b).